A 304-amino-acid chain; its full sequence is Glycine--tRNA ligase alpha subunit (304 aa).

Belongs to the class-II aminoacyl-tRNA synthetase family. As to quaternary structure, tetramer of two alpha and two beta subunits.

The protein resides in the cytoplasm. The catalysed reaction is tRNA(Gly) + glycine + ATP = glycyl-tRNA(Gly) + AMP + diphosphate. The polypeptide is Glycine--tRNA ligase alpha subunit (Pectobacterium carotovorum subsp. carotovorum (strain PC1)).